The following is a 137-amino-acid chain: Diacylglycerol kinase (137 aa).

Position 42 (glutamate 42) interacts with a divalent metal cation. The next 2 helical transmembrane spans lie at leucine 49 to phenylalanine 67 and alanine 73 to isoleucine 89. Glutamate 83 serves as the catalytic Proton acceptor. Glutamate 90 is a binding site for a divalent metal cation. A helical transmembrane segment spans residues serine 112–phenylalanine 132.

It belongs to the bacterial diacylglycerol kinase family. It depends on Mg(2+) as a cofactor.

It is found in the cell inner membrane. It carries out the reaction a 1,2-diacyl-sn-glycerol + ATP = a 1,2-diacyl-sn-glycero-3-phosphate + ADP + H(+). Its function is as follows. Catalyzes the ATP-dependent phosphorylation of sn-l,2-diacylglycerol (DAG) to phosphatidic acid. Involved in the recycling of diacylglycerol produced as a by-product during membrane-derived oligosaccharide (MDO) biosynthesis. The sequence is that of Diacylglycerol kinase (dgkA) from Sinorhizobium sp.